The following is a 372-amino-acid chain: NAD(P)H-quinone oxidoreductase subunit 1 (372 aa).

Helical transmembrane passes span 27–47 (LIWL…GVLV), 97–117 (LLFT…WLIV), 128–148 (VGVG…GLLM), 166–186 (AAQS…VVMM), 204–224 (ILSW…ICAL), 266–286 (VLSA…PVPV), 308–328 (ATGI…AILL), and 347–367 (FLLP…LAFP).

This sequence belongs to the complex I subunit 1 family. As to quaternary structure, NDH-1 is composed of at least 11 different subunits.

The protein localises to the cellular thylakoid membrane. It catalyses the reaction a plastoquinone + NADH + (n+1) H(+)(in) = a plastoquinol + NAD(+) + n H(+)(out). The catalysed reaction is a plastoquinone + NADPH + (n+1) H(+)(in) = a plastoquinol + NADP(+) + n H(+)(out). NDH-1 shuttles electrons from an unknown electron donor, via FMN and iron-sulfur (Fe-S) centers, to quinones in the respiratory and/or the photosynthetic chain. The immediate electron acceptor for the enzyme in this species is believed to be plastoquinone. Couples the redox reaction to proton translocation, and thus conserves the redox energy in a proton gradient. The protein is NAD(P)H-quinone oxidoreductase subunit 1 of Synechococcus sp. (strain WH7803).